A 226-amino-acid polypeptide reads, in one-letter code: ATP synthase F(0) complex subunit a (226 aa).

The next 7 membrane-spanning stretches (helical) occupy residues 11–31 (SPEL…VLLI), 37–54 (LLGN…MTIM), 72–92 (LTSL…PYTF), 98–118 (LSMN…TGMT), 138–158 (IPFM…ALGV), 178–198 (TLNF…LLFL), and 199–219 (LCIL…LLII).

This sequence belongs to the ATPase A chain family. As to quaternary structure, component of the ATP synthase complex composed at least of ATP5F1A/subunit alpha, ATP5F1B/subunit beta, ATP5MC1/subunit c (homooctomer), MT-ATP6/subunit a, MT-ATP8/subunit 8, ATP5ME/subunit e, ATP5MF/subunit f, ATP5MG/subunit g, ATP5MK/subunit k, ATP5MJ/subunit j, ATP5F1C/subunit gamma, ATP5F1D/subunit delta, ATP5F1E/subunit epsilon, ATP5PF/subunit F6, ATP5PB/subunit b, ATP5PD/subunit d, ATP5PO/subunit OSCP. ATP synthase complex consists of a soluble F(1) head domain (subunits alpha(3) and beta(3)) - the catalytic core - and a membrane F(0) domain - the membrane proton channel (subunits c, a, 8, e, f, g, k and j). These two domains are linked by a central stalk (subunits gamma, delta, and epsilon) rotating inside the F1 region and a stationary peripheral stalk (subunits F6, b, d, and OSCP). Interacts with DNAJC30; interaction is direct.

It is found in the mitochondrion inner membrane. It catalyses the reaction H(+)(in) = H(+)(out). In terms of biological role, subunit a, of the mitochondrial membrane ATP synthase complex (F(1)F(0) ATP synthase or Complex V) that produces ATP from ADP in the presence of a proton gradient across the membrane which is generated by electron transport complexes of the respiratory chain. ATP synthase complex consist of a soluble F(1) head domain - the catalytic core - and a membrane F(1) domain - the membrane proton channel. These two domains are linked by a central stalk rotating inside the F(1) region and a stationary peripheral stalk. During catalysis, ATP synthesis in the catalytic domain of F(1) is coupled via a rotary mechanism of the central stalk subunits to proton translocation. With the subunit c (ATP5MC1), forms the proton-conducting channel in the F(0) domain, that contains two crucial half-channels (inlet and outlet) that facilitate proton movement from the mitochondrial intermembrane space (IMS) into the matrix. Protons are taken up via the inlet half-channel and released through the outlet half-channel, following a Grotthuss mechanism. The polypeptide is ATP synthase F(0) complex subunit a (Lycodon semicarinatus (Ryukyu odd-tooth snake)).